Reading from the N-terminus, the 427-residue chain is Serine--tRNA ligase (427 aa).

Thr-233–Glu-235 contributes to the L-serine binding site. Arg-264–Glu-266 is an ATP binding site. Glu-287 provides a ligand contact to L-serine. Glu-351–Ser-354 provides a ligand contact to ATP. Residue Ser-387 coordinates L-serine.

The protein belongs to the class-II aminoacyl-tRNA synthetase family. Type-1 seryl-tRNA synthetase subfamily. Homodimer. The tRNA molecule binds across the dimer.

The protein resides in the cytoplasm. It catalyses the reaction tRNA(Ser) + L-serine + ATP = L-seryl-tRNA(Ser) + AMP + diphosphate + H(+). The catalysed reaction is tRNA(Sec) + L-serine + ATP = L-seryl-tRNA(Sec) + AMP + diphosphate + H(+). It participates in aminoacyl-tRNA biosynthesis; selenocysteinyl-tRNA(Sec) biosynthesis; L-seryl-tRNA(Sec) from L-serine and tRNA(Sec): step 1/1. Catalyzes the attachment of serine to tRNA(Ser). Is also able to aminoacylate tRNA(Sec) with serine, to form the misacylated tRNA L-seryl-tRNA(Sec), which will be further converted into selenocysteinyl-tRNA(Sec). This is Serine--tRNA ligase from Buchnera aphidicola subsp. Schizaphis graminum (strain Sg).